Here is an 820-residue protein sequence, read N- to C-terminus: Phenylalanine--tRNA ligase beta subunit (820 aa).

In terms of domain architecture, tRNA-binding spans 42-154 (KGGLEGLVIG…EDAVPGTLAK (113 aa)). Residues 413-489 (AQDFIVELTY…RIYGYNNVEI (77 aa)) enclose the B5 domain. Mg(2+)-binding residues include Asp467, Asp473, Glu476, and Asp477. The 94-residue stretch at 727–820 (SKFPAVKRDL…LEDKLGAKLR (94 aa)) folds into the FDX-ACB domain.

It belongs to the phenylalanyl-tRNA synthetase beta subunit family. Type 1 subfamily. As to quaternary structure, tetramer of two alpha and two beta subunits. Mg(2+) serves as cofactor.

The protein localises to the cytoplasm. It catalyses the reaction tRNA(Phe) + L-phenylalanine + ATP = L-phenylalanyl-tRNA(Phe) + AMP + diphosphate + H(+). The sequence is that of Phenylalanine--tRNA ligase beta subunit from Bacteroides fragilis (strain ATCC 25285 / DSM 2151 / CCUG 4856 / JCM 11019 / LMG 10263 / NCTC 9343 / Onslow / VPI 2553 / EN-2).